The primary structure comprises 190 residues: MIGKLTGTLLEKNPPEVLVDCGGVGYEVQVPMSTFYNLPASGAKVSLLTHFVVREDAQLLYGFGTHSERQAFRELIKITGIGPRMALSVLSGMSVEDLAQAVTLQEVGRLVKVPGIGKKTAERLLLELKGKIGADTGAQSLFVNNDQNDIVQALMALGYSDKDAAAALKKLPPDVGVTEGIKLALKALAK.

Residues 1–64 (MIGKLTGTLL…EDAQLLYGFG (64 aa)) are domain I. Residues 65-143 (THSERQAFRE…ADTGAQSLFV (79 aa)) are domain II. The flexible linker stretch occupies residues 144 to 148 (NNDQN). The segment at 148–190 (NDIVQALMALGYSDKDAAAALKKLPPDVGVTEGIKLALKALAK) is domain III.

Belongs to the RuvA family. Homotetramer. Forms an RuvA(8)-RuvB(12)-Holliday junction (HJ) complex. HJ DNA is sandwiched between 2 RuvA tetramers; dsDNA enters through RuvA and exits via RuvB. An RuvB hexamer assembles on each DNA strand where it exits the tetramer. Each RuvB hexamer is contacted by two RuvA subunits (via domain III) on 2 adjacent RuvB subunits; this complex drives branch migration. In the full resolvosome a probable DNA-RuvA(4)-RuvB(12)-RuvC(2) complex forms which resolves the HJ.

Its subcellular location is the cytoplasm. Its function is as follows. The RuvA-RuvB-RuvC complex processes Holliday junction (HJ) DNA during genetic recombination and DNA repair, while the RuvA-RuvB complex plays an important role in the rescue of blocked DNA replication forks via replication fork reversal (RFR). RuvA specifically binds to HJ cruciform DNA, conferring on it an open structure. The RuvB hexamer acts as an ATP-dependent pump, pulling dsDNA into and through the RuvAB complex. HJ branch migration allows RuvC to scan DNA until it finds its consensus sequence, where it cleaves and resolves the cruciform DNA. This chain is Holliday junction branch migration complex subunit RuvA, found in Delftia acidovorans (strain DSM 14801 / SPH-1).